Consider the following 365-residue polypeptide: Ferrochelatase (365 aa).

Residues His211 and Glu292 each coordinate Fe cation.

The protein belongs to the ferrochelatase family.

It is found in the cytoplasm. The enzyme catalyses heme b + 2 H(+) = protoporphyrin IX + Fe(2+). It participates in porphyrin-containing compound metabolism; protoheme biosynthesis; protoheme from protoporphyrin-IX: step 1/1. Functionally, catalyzes the ferrous insertion into protoporphyrin IX. The chain is Ferrochelatase from Aromatoleum aromaticum (strain DSM 19018 / LMG 30748 / EbN1) (Azoarcus sp. (strain EbN1)).